Reading from the N-terminus, the 455-residue chain is Glycosyl hydrolase family 109 protein (455 aa).

The segment at residues 1-33 (MAGIDRRGFLKASMASVAAAALAGCASQQGTSA) is a signal peptide (tat-type signal). NAD(+) contacts are provided by residues 62-63 (ER), aspartate 84, glutamine 112, 133-136 (WALH), 153-154 (EV), and asparagine 182. Residues tyrosine 211, arginine 230, 242–245 (YPTH), and tyrosine 324 contribute to the substrate site. Residue tyrosine 242 coordinates NAD(+).

Belongs to the Gfo/Idh/MocA family. Glycosyl hydrolase 109 subfamily. It depends on NAD(+) as a cofactor. Post-translationally, predicted to be exported by the Tat system. The position of the signal peptide cleavage has not been experimentally proven.

Glycosidase. This Shewanella amazonensis (strain ATCC BAA-1098 / SB2B) protein is Glycosyl hydrolase family 109 protein.